The chain runs to 72 residues: VKRPMNAFMVWSQSRAGKIMEQSPDMHNAEISKRRGKRWKLLKDSDKIPFIRAAERLRLKHMADYPDYKYRP.

A DNA-binding region (HMG box) is located at residues 1-69; it reads VKRPMNAFMV…KHMADYPDYK (69 aa).

It is found in the nucleus. The polypeptide is SRY-related protein AES6 (Alligator mississippiensis (American alligator)).